Reading from the N-terminus, the 238-residue chain is Proteasome subunit beta type-6 (238 aa).

A2 carries the N-acetylalanine modification. A propeptide spans A2–G33 (removed in mature form). The active-site Nucleophile is T34. T68 is subject to Phosphothreonine.

Belongs to the peptidase T1B family. The 26S proteasome consists of a 20S proteasome core and two 19S regulatory subunits. The 20S proteasome core is a barrel-shaped complex made of 28 subunits that are arranged in four stacked rings. The two outer rings are each formed by seven alpha subunits, and the two inner rings are formed by seven beta subunits. The proteolytic activity is exerted by three beta-subunits PSMB5, PSMB6 and PSMB7.

It localises to the cytoplasm. The protein resides in the nucleus. It catalyses the reaction Cleavage of peptide bonds with very broad specificity.. In terms of biological role, component of the 20S core proteasome complex involved in the proteolytic degradation of most intracellular proteins. This complex plays numerous essential roles within the cell by associating with different regulatory particles. Associated with two 19S regulatory particles, forms the 26S proteasome and thus participates in the ATP-dependent degradation of ubiquitinated proteins. The 26S proteasome plays a key role in the maintenance of protein homeostasis by removing misfolded or damaged proteins that could impair cellular functions, and by removing proteins whose functions are no longer required. Associated with the PA200 or PA28, the 20S proteasome mediates ubiquitin-independent protein degradation. This type of proteolysis is required in several pathways including spermatogenesis (20S-PA200 complex) or generation of a subset of MHC class I-presented antigenic peptides (20S-PA28 complex). Within the 20S core complex, PSMB6 displays a peptidylglutamyl-hydrolyzing activity also termed postacidic or caspase-like activity, meaning that the peptides bond hydrolysis occurs directly after acidic residues. The polypeptide is Proteasome subunit beta type-6 (Psmb6) (Rattus norvegicus (Rat)).